The sequence spans 355 residues: Putative transport protein PH1000 (355 aa).

8 helical membrane-spanning segments follow: residues 34–54, 55–75, 84–104, 158–178, 212–232, 240–260, 274–294, and 310–330; these read VTWI…LPFF, SPLF…IKLK, AILL…ILVY, FSVP…YFFL, VWLL…LIFK, ILAG…GWMI, IIAG…LPDF, and VLVL…GLII.

It belongs to the autoinducer-2 exporter (AI-2E) (TC 2.A.86) family.

Its subcellular location is the cell membrane. This chain is Putative transport protein PH1000, found in Pyrococcus horikoshii (strain ATCC 700860 / DSM 12428 / JCM 9974 / NBRC 100139 / OT-3).